Here is a 278-residue protein sequence, read N- to C-terminus: Ribosomal RNA small subunit methyltransferase A (278 aa).

Residues Asn-28, Leu-30, Gly-55, Glu-77, Asp-103, and Asn-122 each contribute to the S-adenosyl-L-methionine site.

This sequence belongs to the class I-like SAM-binding methyltransferase superfamily. rRNA adenine N(6)-methyltransferase family. RsmA subfamily.

The protein localises to the cytoplasm. The enzyme catalyses adenosine(1518)/adenosine(1519) in 16S rRNA + 4 S-adenosyl-L-methionine = N(6)-dimethyladenosine(1518)/N(6)-dimethyladenosine(1519) in 16S rRNA + 4 S-adenosyl-L-homocysteine + 4 H(+). Specifically dimethylates two adjacent adenosines (A1518 and A1519) in the loop of a conserved hairpin near the 3'-end of 16S rRNA in the 30S particle. May play a critical role in biogenesis of 30S subunits. This Cereibacter sphaeroides (strain ATCC 17025 / ATH 2.4.3) (Rhodobacter sphaeroides) protein is Ribosomal RNA small subunit methyltransferase A.